Reading from the N-terminus, the 567-residue chain is Diacylglycerol kinase epsilon (567 aa).

The chain crosses the membrane as a helical span at residues 22–42 (LILWTLCSVLLPVFITFWCSL). Phorbol-ester/DAG-type zinc fingers lie at residues 59–108 (KHGW…RFQC) and 124–177 (PHHW…NEKC). One can recognise a DAGKc domain in the interval 215-356 (KQWTPLIILA…LDRWKVQVTN (142 aa)).

The protein belongs to the eukaryotic diacylglycerol kinase family. In terms of tissue distribution, expressed predominantly in testis. Expressed in endothelium, platelets and podocytes (at protein level).

Its subcellular location is the membrane. The protein localises to the cytoplasm. The catalysed reaction is a 1,2-diacyl-sn-glycerol + ATP = a 1,2-diacyl-sn-glycero-3-phosphate + ADP + H(+). It catalyses the reaction 1-hexadecanoyl-2-(5Z,8Z,11Z,14Z-eicosatetraenoyl)-sn-glycerol + ATP = 1-hexadecanoyl-2-(5Z,8Z,11Z,14Z-eicosatetraenoyl)-sn-glycero-3-phosphate + ADP + H(+). It carries out the reaction 1-octadecanoyl-2-(5Z,8Z,11Z,14Z-eicosatetraenoyl)-sn-glycerol + ATP = 1-octadecanoyl-2-(5Z,8Z,11Z,14Z-eicosatetraenoyl)-sn-glycero-3-phosphate + ADP + H(+). The enzyme catalyses 1-eicosanoyl-2-(5Z,8Z,11Z,14Z)-eicosatetraenoyl-sn-glycerol + ATP = 1-eicosanoyl-2-(5Z,8Z,11Z,14Z)-eicosatetraenoyl-sn-glycero-3-phosphate + ADP + H(+). The catalysed reaction is 1,2-di-(5Z,8Z,11Z,14Z)-eicosatetraenoyl-sn-glycerol + ATP = 1,2-di-(5Z,8Z,11Z,14Z)-eicosatetraenoyl-sn-glycero-3-phosphate + ADP + H(+). It catalyses the reaction 1-octadecanoyl-2-(9Z,12Z)-octadecadienoyl-sn-glycerol + ATP = 1-octadecanoyl-2-(9Z,12Z-octadecadienoyl)-sn-glycero-3-phosphate + ADP + H(+). It carries out the reaction 1,2-di-(9Z,12Z-octadecadienoyl)-sn-glycerol + ATP = 1,2-di-(9Z,12Z-octadecadienoyl)-sn-glycero-3-phosphate + ADP + H(+). The enzyme catalyses 1,2-di-(9Z-octadecenoyl)-sn-glycerol + ATP = 1,2-di-(9Z-octadecenoyl)-sn-glycero-3-phosphate + ADP + H(+). It functions in the pathway lipid metabolism; glycerolipid metabolism. Undergoes competitive inhibition by its own product 1,2-diacyl-sn-glycero-3-phosphate/phosphatidic acid. The strongest inhibition being observed in vitro with 1-octadecanoyl-2-(5Z,8Z,11Z,14Z-eicosatetraenoyl)-sn-glycero-3-phosphate, a major intermediate in the phosphatidylinositol turnover cycle and more generally by diacylglycerols with an arachidonoyl acyl chain at the sn-2 position. Functionally, membrane-bound diacylglycerol kinase that converts diacylglycerol/DAG into phosphatidic acid/phosphatidate/PA and regulates the respective levels of these two bioactive lipids. Thereby, acts as a central switch between the signaling pathways activated by these second messengers with different cellular targets and opposite effects in numerous biological processes. Also plays an important role in the biosynthesis of complex lipids. Displays specificity for diacylglycerol substrates with an arachidonoyl acyl chain at the sn-2 position, with the highest activity toward 1-octadecanoyl-2-(5Z,8Z,11Z,14Z-eicosatetraenoyl)-sn-glycerol the main diacylglycerol intermediate within the phosphatidylinositol turnover cycle. Can also phosphorylate diacylglycerol substrates with a linoleoyl acyl chain at the sn-2 position but much less efficiently. This Homo sapiens (Human) protein is Diacylglycerol kinase epsilon (DGKE).